We begin with the raw amino-acid sequence, 475 residues long: UDP-N-acetylmuramate--L-alanine ligase (475 aa).

Glycine 125–threonine 131 lines the ATP pocket.

Belongs to the MurCDEF family.

The protein resides in the cytoplasm. It catalyses the reaction UDP-N-acetyl-alpha-D-muramate + L-alanine + ATP = UDP-N-acetyl-alpha-D-muramoyl-L-alanine + ADP + phosphate + H(+). It functions in the pathway cell wall biogenesis; peptidoglycan biosynthesis. Its function is as follows. Cell wall formation. This chain is UDP-N-acetylmuramate--L-alanine ligase, found in Haemophilus influenzae (strain 86-028NP).